We begin with the raw amino-acid sequence, 206 residues long: Ribosomal RNA small subunit methyltransferase G (206 aa).

S-adenosyl-L-methionine contacts are provided by residues glycine 73, leucine 78, 124-125, and arginine 139; that span reads VE.

This sequence belongs to the methyltransferase superfamily. RNA methyltransferase RsmG family.

It localises to the cytoplasm. It carries out the reaction guanosine(527) in 16S rRNA + S-adenosyl-L-methionine = N(7)-methylguanosine(527) in 16S rRNA + S-adenosyl-L-homocysteine. Functionally, specifically methylates the N7 position of guanine in position 527 of 16S rRNA. The polypeptide is Ribosomal RNA small subunit methyltransferase G (Yersinia pseudotuberculosis serotype O:1b (strain IP 31758)).